The primary structure comprises 485 residues: MLLLELKKTNQTLETIHFIGIGGVGMSGIAEILYNLGYKVQGSDLVENYNTKRLESYGIKIFLGHAEQNITNVSYVVISSAINPKNPEIKEALERKIPIIRRADMLAELMRLKCSVAVSGSHGKTTTTSLVACLFEAAGLCPTVINGGIINNKLTNAYLGSSNYLIAEADESDATFIHIPSTIAIITNIDPEHLDYYRDFETLIGAFRSFITNLPFYGFAVCCIDHKIVRKLVDEITERKIVTYGIDSEDAHIIAFNINTDIASSTFDVKISLPNVLGTTIIEKITIPTPGRHNILNSLAAIAVGIELDFGIKAIKNGFNNFKGVKRRFTKVAEYNNASIIDDYAHHPEEIKATLATAKNIANKQNGKVIAIFQPHRYSRMQYLFDDFMLCFADADILYITDIYAAGENPIEGITGRSLVDKITKRKHHDKANFLAELDDAVGVIIDNAASGDMIIMMGAGNISSFANELDGRLSSSGFSCHTVV.

120 to 126 (GSHGKTT) serves as a coordination point for ATP.

It belongs to the MurCDEF family.

The protein localises to the cytoplasm. The catalysed reaction is UDP-N-acetyl-alpha-D-muramate + L-alanine + ATP = UDP-N-acetyl-alpha-D-muramoyl-L-alanine + ADP + phosphate + H(+). It functions in the pathway cell wall biogenesis; peptidoglycan biosynthesis. Its function is as follows. Cell wall formation. In Rickettsia peacockii (strain Rustic), this protein is UDP-N-acetylmuramate--L-alanine ligase.